We begin with the raw amino-acid sequence, 506 residues long: Apolipoprotein N-acyltransferase (506 aa).

6 helical membrane-spanning segments follow: residues 24-44, 58-78, 85-105, 125-145, 162-182, and 192-212; these read LALAPFDFWPLVLVSVAMFYL, GWCYGFGLYGAGTSWIYVSIH, ALLAGLLMLLFIAAIALFFAL, LAFAALWLWQEAFRGWFLTGF, LAPVGGVWLISFALGLTAALL, and KSFLAMGVLLLLAPWVAGLAL. Residues 230–470 form the CN hydrolase domain; that stretch reads MQGNIEQSMK…RGVLYGEVVP (241 aa). Glu-269 serves as the catalytic Proton acceptor. Residue Lys-330 is part of the active site. The Nucleophile role is filled by Cys-382. The chain crosses the membrane as a helical span at residues 482 to 502; the sequence is SWPLAIVCLLLFGWALLAARI.

This sequence belongs to the CN hydrolase family. Apolipoprotein N-acyltransferase subfamily.

It localises to the cell inner membrane. It catalyses the reaction N-terminal S-1,2-diacyl-sn-glyceryl-L-cysteinyl-[lipoprotein] + a glycerophospholipid = N-acyl-S-1,2-diacyl-sn-glyceryl-L-cysteinyl-[lipoprotein] + a 2-acyl-sn-glycero-3-phospholipid + H(+). The protein operates within protein modification; lipoprotein biosynthesis (N-acyl transfer). Catalyzes the phospholipid dependent N-acylation of the N-terminal cysteine of apolipoprotein, the last step in lipoprotein maturation. The polypeptide is Apolipoprotein N-acyltransferase (Pseudomonas syringae pv. tomato (strain ATCC BAA-871 / DC3000)).